The following is a 445-amino-acid chain: 3-phosphoshikimate 1-carboxyvinyltransferase (445 aa).

Lys-28, Ser-29, and Arg-33 together coordinate 3-phosphoshikimate. A phosphoenolpyruvate-binding site is contributed by Lys-28. The phosphoenolpyruvate site is built by Gly-101 and Arg-129. 4 residues coordinate 3-phosphoshikimate: Ser-175, Gln-177, Asp-328, and Lys-355. Gln-177 lines the phosphoenolpyruvate pocket. Asp-328 acts as the Proton acceptor in catalysis. 2 residues coordinate phosphoenolpyruvate: Arg-359 and Arg-402.

The protein belongs to the EPSP synthase family. In terms of assembly, monomer.

The protein resides in the cytoplasm. The catalysed reaction is 3-phosphoshikimate + phosphoenolpyruvate = 5-O-(1-carboxyvinyl)-3-phosphoshikimate + phosphate. The protein operates within metabolic intermediate biosynthesis; chorismate biosynthesis; chorismate from D-erythrose 4-phosphate and phosphoenolpyruvate: step 6/7. In terms of biological role, catalyzes the transfer of the enolpyruvyl moiety of phosphoenolpyruvate (PEP) to the 5-hydroxyl of shikimate-3-phosphate (S3P) to produce enolpyruvyl shikimate-3-phosphate and inorganic phosphate. The chain is 3-phosphoshikimate 1-carboxyvinyltransferase from Rhodopseudomonas palustris (strain HaA2).